Here is a 365-residue protein sequence, read N- to C-terminus: Deoxyguanosinetriphosphate triphosphohydrolase-like protein (365 aa).

The region spanning 52-187 is the HD domain; that stretch reads RLTHSIEVSQ…VDHADEIAYV (136 aa).

The protein belongs to the dGTPase family. Type 2 subfamily.

The protein is Deoxyguanosinetriphosphate triphosphohydrolase-like protein of Wolinella succinogenes (strain ATCC 29543 / DSM 1740 / CCUG 13145 / JCM 31913 / LMG 7466 / NCTC 11488 / FDC 602W) (Vibrio succinogenes).